The primary structure comprises 254 residues: Insulin-like growth factor-binding protein 4 (254 aa).

The first 21 residues, 1 to 21 (MLPFGLVAALLLAAGPRPSLG), serve as a signal peptide directing secretion. One can recognise an IGFBP N-terminal domain in the interval 23 to 103 (EAIHCPPCSE…MHGQGVCTEL (81 aa)). Disulfide bonds link cysteine 27/cysteine 53, cysteine 30/cysteine 55, cysteine 38/cysteine 56, cysteine 44/cysteine 59, cysteine 67/cysteine 80, and cysteine 74/cysteine 100. N-linked (GlcNAc...) asparagine glycosylation is present at asparagine 125. 4 cysteine pairs are disulfide-bonded: cysteine 131/cysteine 138, cysteine 170/cysteine 200, cysteine 211/cysteine 222, and cysteine 224/cysteine 245. Residues 167–245 (QGSCQSELHR…GLEPKGELDC (79 aa)) form the Thyroglobulin type-1 domain. At serine 251 the chain carries Phosphoserine.

Binds IGF2 more than IGF1.

The protein resides in the secreted. IGF-binding proteins prolong the half-life of the IGFs and have been shown to either inhibit or stimulate the growth promoting effects of the IGFs on cell culture. They alter the interaction of IGFs with their cell surface receptors. The polypeptide is Insulin-like growth factor-binding protein 4 (Igfbp4) (Mus musculus (Mouse)).